Reading from the N-terminus, the 518-residue chain is Retinal dehydrogenase 2 (518 aa).

NAD(+) is bound by residues 184-186 (IPW), 210-213 (KPAE), and 264-266 (STE). E286 (proton acceptor) is an active-site residue. C320 serves as the catalytic Nucleophile. Residues 366–370 (KQYNK) and E417 contribute to the NAD(+) site.

It belongs to the aldehyde dehydrogenase family. In terms of assembly, homotetramer.

It localises to the cytoplasm. It carries out the reaction retinal + NAD(+) + H2O = retinoate + NADH + 2 H(+). It catalyses the reaction all-trans-retinal + NAD(+) + H2O = all-trans-retinoate + NADH + 2 H(+). The catalysed reaction is all-trans-13,14-dihydroretinal + NAD(+) + H2O = all-trans-13,14-dihydroretinoate + NADH + 2 H(+). Its pathway is cofactor metabolism; retinol metabolism. Its function is as follows. Catalyzes the NAD-dependent oxidation of aldehyde substrates, such as all-trans-retinal and all-trans-13,14-dihydroretinal, to their corresponding carboxylic acids, all-trans-retinoate and all-trans-13,14-dihydroretinoate, respectively. Retinoate signaling is critical for the transcriptional control of many genes, for instance it is crucial for initiation of meiosis in both male and female. Recognizes retinal as substrate, both in its free form and when bound to cellular retinol-binding protein. Lacks activity with benzaldehyde, acetaldehyde and octanal. Displays complete lack of activity with citral. The chain is Retinal dehydrogenase 2 (ALDH1A2) from Gallus gallus (Chicken).